A 259-amino-acid chain; its full sequence is Archaerhodopsin-2 (259 aa).

Positions 1-6 are excised as a propeptide; sequence MDPIAL. Residue glutamine 7 is modified to Pyrrolidone carboxylic acid. The Extracellular segment spans residues 7–18; the sequence is QAGFDLLNDGRP. The chain crosses the membrane as a helical span at residues 19 to 40; the sequence is ETLWLGIGTLLMLIGTFYFIAR. At 41-49 the chain is on the cytoplasmic side; it reads GWGVTDKEA. A helical membrane pass occupies residues 50–71; sequence REYYAITILVPGIASAAYLAMF. Over 72-90 the chain is Extracellular; it reads FGIGVTEVELASGTVLDIY. The helical transmembrane segment at 91–112 threads the bilayer; sequence YARYADWLFTTPLLLLDLALLA. Over 113 to 115 the chain is Cytoplasmic; the sequence is KVD. Residues 116 to 138 traverse the membrane as a helical segment; the sequence is RVTIGTLIGVDALMIVTGLIGAL. The Extracellular segment spans residues 139-142; the sequence is SKTP. Residues 143–171 form a helical membrane-spanning segment; the sequence is LARYTWWLFSTIAFLFVLYYLLTSLRSAA. Residues 172-174 are Cytoplasmic-facing; sequence AKR. The chain crosses the membrane as a helical span at residues 175–203; it reads SEEVRSTFNTLTALVAVLWTAYPILWIVG. Over 204-211 the chain is Extracellular; sequence TEGAGVVG. Residues 212–244 traverse the membrane as a helical segment; the sequence is LGIETLAFMVLDVTAKVGFGFVLLRSRAILGET. N6-(retinylidene)lysine is present on lysine 227. The Cytoplasmic portion of the chain corresponds to 245-259; sequence EAPEPSAGADASAAD.

Belongs to the archaeal/bacterial/fungal opsin family.

The protein resides in the cell membrane. Functionally, light-driven proton pump. It may interact with bacterioruberin in the claret membrane. This is Archaerhodopsin-2 from Halobacterium sp. (strain aus-2).